Reading from the N-terminus, the 1052-residue chain is Mediator of RNA polymerase II transcription subunit 5 (1052 aa).

The disordered stretch occupies residues 949–982 (GGDDEQREQHQQQQPDADQSNQGVVAPTGNTPGN). Positions 959–970 (QQQQPDADQSNQ) are enriched in low complexity.

This sequence belongs to the Mediator complex subunit 5 family. Component of the Mediator complex.

The protein localises to the nucleus. Functionally, component of the Mediator complex, a coactivator involved in the regulated transcription of nearly all RNA polymerase II-dependent genes. Mediator functions as a bridge to convey information from gene-specific regulatory proteins to the basal RNA polymerase II transcription machinery. Mediator is recruited to promoters by direct interactions with regulatory proteins and serves as a scaffold for the assembly of a functional preinitiation complex with RNA polymerase II and the general transcription factors. The polypeptide is Mediator of RNA polymerase II transcription subunit 5 (NUT1) (Coccidioides immitis (strain RS) (Valley fever fungus)).